A 170-amino-acid polypeptide reads, in one-letter code: MDIEKVNSMDFGEFVDVFGNVIERCPLIAAAVWSKRPFSGLGDLEKHFFAFIDGLPLSGQEGVLRCHPELAGRQLPWGRLTAESQREQSAAGLQNLGAAERLRFTELTAQYRTRFGFPFVLALRLSDPAAAPRELARRLRCPPAQELRTALGEVKKICHLRLANLLGEQP.

His-67 acts as the Proton donor in catalysis. Substrate contacts are provided by residues Pro-68, 84-88 (SQREQ), and 119-123 (FVLAL).

It belongs to the OHCU decarboxylase family.

Its subcellular location is the peroxisome. The enzyme catalyses 5-hydroxy-2-oxo-4-ureido-2,5-dihydro-1H-imidazole-5-carboxylate + H(+) = (S)-allantoin + CO2. It functions in the pathway purine metabolism; urate degradation; (S)-allantoin from urate: step 3/3. In terms of biological role, catalyzes the stereoselective decarboxylation of 2-oxo-4-hydroxy-4-carboxy-5-ureidoimidazoline (OHCU) to (S)-allantoin. This Bos taurus (Bovine) protein is 2-oxo-4-hydroxy-4-carboxy-5-ureidoimidazoline decarboxylase (URAD).